We begin with the raw amino-acid sequence, 308 residues long: MEKTVNPFRIGIAPISWVNDDIPGLGDHYTQDQVLSEMAELGYVATEMGRLFSQDPPSLRAKLNQYGIELASKFIGVLFSDRSRLEEELKTFRSWAEYLHDMGCKYAIVCEMGGSMHWDPRRAPEEKTIQRLTDSEWESLVDGLHRAAHICQELGMKLVYHFHAGTVVETAEEIDRLMELTDPNLVHLLYDTGHALYGGYDPVELLHRYADRIQYVHLKDVRHDVLELVRREQLDFRTAVLRGMFTVPGDGCIDFVPIFAKLIEMDYNGWIIVEAEQDPAVAHPYTYAKMAKEYIDRLVHHLLAAQKR.

Belongs to the IolE/MocC family. It depends on glutathione as a cofactor. The cofactor is Co(2+). Mn(2+) is required as a cofactor.

The enzyme catalyses scyllo-inosose = 3D-3,5/4-trihydroxycyclohexane-1,2-dione + H2O. The protein operates within polyol metabolism; myo-inositol degradation into acetyl-CoA; acetyl-CoA from myo-inositol: step 2/7. Its function is as follows. Catalyzes the dehydration of inosose (2-keto-myo-inositol, 2KMI or 2,4,6/3,5-pentahydroxycyclohexanone) to 3D-(3,5/4)-trihydroxycyclohexane-1,2-dione (D-2,3-diketo-4-deoxy-epi-inositol). The protein is Inosose dehydratase of Geobacillus kaustophilus (strain HTA426).